A 109-amino-acid chain; its full sequence is SIAFSRAVFSEFLATLLFVFFGLGSALNWPQALPSVLQIAMAFGLAIGTLVQALGHISGAHINPAVTVACLVGCHVSFLRATFYLAAQLLGAVAGAAILHEITPPDIRG.

At 1–6 (SIAFSR) the chain is on the cytoplasmic side. The helical transmembrane segment at 7-27 (AVFSEFLATLLFVFFGLGSAL) threads the bilayer. Topologically, residues 28 to 35 (NWPQALPS) are extracellular. A helical membrane pass occupies residues 36 to 54 (VLQIAMAFGLAIGTLVQAL). The Cytoplasmic portion of the chain corresponds to 55 to 59 (GHISG). Residues 60 to 69 (AHINPAVTVA) constitute an intramembrane region (discontinuously helical). The short motif at 63 to 65 (NPA) is the NPA 1 element. Residues 70-80 (CLVGCHVSFLR) are Cytoplasmic-facing. Residues 81–102 (ATFYLAAQLLGAVAGAAILHEI) form a helical membrane-spanning segment. At 103–109 (TPPDIRG) the chain is on the extracellular side.

The protein belongs to the MIP/aquaporin (TC 1.A.8) family. As to quaternary structure, homotetramer. In terms of processing, serine phosphorylation is necessary and sufficient for expression at the apical membrane. Endocytosis is not phosphorylation-dependent. N-glycosylated.

The protein resides in the apical cell membrane. Its subcellular location is the basolateral cell membrane. It is found in the cell membrane. It localises to the cytoplasmic vesicle membrane. The protein localises to the golgi apparatus. The protein resides in the trans-Golgi network membrane. It carries out the reaction H2O(in) = H2O(out). The catalysed reaction is glycerol(in) = glycerol(out). Forms a water-specific channel that provides the plasma membranes of renal collecting duct with high permeability to water, thereby permitting water to move in the direction of an osmotic gradient. Plays an essential role in renal water homeostasis. Could also be permeable to glycerol. The protein is Aquaporin-2 of Dugong dugon (Dugong).